Consider the following 357-residue polypeptide: Uroporphyrinogen decarboxylase (357 aa).

Substrate is bound by residues 27-31, aspartate 77, tyrosine 154, serine 209, and histidine 330; that span reads RQAGR.

This sequence belongs to the uroporphyrinogen decarboxylase family. Homodimer.

It is found in the cytoplasm. It carries out the reaction uroporphyrinogen III + 4 H(+) = coproporphyrinogen III + 4 CO2. It participates in porphyrin-containing compound metabolism; protoporphyrin-IX biosynthesis; coproporphyrinogen-III from 5-aminolevulinate: step 4/4. Catalyzes the decarboxylation of four acetate groups of uroporphyrinogen-III to yield coproporphyrinogen-III. The polypeptide is Uroporphyrinogen decarboxylase (Acinetobacter baumannii (strain ACICU)).